The primary structure comprises 685 residues: Methionine--tRNA ligase (685 aa).

The 'HIGH' region motif lies at 15–25 (PYANGPIHLGH). The Zn(2+) site is built by Cys-146, Cys-149, Cys-159, and Cys-162. A 'KMSKS' region motif is present at residues 331-335 (KMSKS). Lys-334 contacts ATP. A tRNA-binding domain is found at 583–685 (DFAKMDLRVA…AGVKAGSRVK (103 aa)).

The protein belongs to the class-I aminoacyl-tRNA synthetase family. MetG type 1 subfamily. As to quaternary structure, homodimer. It depends on Zn(2+) as a cofactor.

The protein localises to the cytoplasm. The catalysed reaction is tRNA(Met) + L-methionine + ATP = L-methionyl-tRNA(Met) + AMP + diphosphate. In terms of biological role, is required not only for elongation of protein synthesis but also for the initiation of all mRNA translation through initiator tRNA(fMet) aminoacylation. In Actinobacillus succinogenes (strain ATCC 55618 / DSM 22257 / CCUG 43843 / 130Z), this protein is Methionine--tRNA ligase.